The chain runs to 325 residues: Ribosomal large subunit pseudouridine synthase D (325 aa).

Residues 18–78 enclose the S4 RNA-binding domain; the sequence is YRLDQALAQL…AEIEEEIRFE (61 aa). Aspartate 139 is an active-site residue.

It belongs to the pseudouridine synthase RluA family.

It localises to the cytoplasm. The enzyme catalyses uridine(1911/1915/1917) in 23S rRNA = pseudouridine(1911/1915/1917) in 23S rRNA. Its function is as follows. Responsible for synthesis of pseudouridine from uracil at positions 1911, 1915 and 1917 in 23S ribosomal RNA. This is Ribosomal large subunit pseudouridine synthase D (rluD) from Haemophilus ducreyi (strain 35000HP / ATCC 700724).